Here is a 600-residue protein sequence, read N- to C-terminus: Arginine--tRNA ligase (600 aa).

L-arginine is bound by residues 151 to 153 (SPN), H162, Y332, D336, and Q360. The 'HIGH' region signature appears at 152–162 (PNIAKEMHIGH).

Belongs to the class-I aminoacyl-tRNA synthetase family.

It catalyses the reaction tRNA(Arg) + L-arginine + ATP = L-arginyl-tRNA(Arg) + AMP + diphosphate. The sequence is that of Arginine--tRNA ligase (RARS) from Acanthamoeba polyphaga mimivirus (APMV).